The sequence spans 710 residues: DNA ligase (710 aa).

Residues 53-57 (DAEYD), 102-103 (SL), and glutamate 136 each bind NAD(+). Lysine 138 functions as the N6-AMP-lysine intermediate in the catalytic mechanism. Residues arginine 159, glutamate 196, lysine 312, and lysine 336 each contribute to the NAD(+) site. 4 residues coordinate Zn(2+): cysteine 429, cysteine 432, cysteine 453, and cysteine 459. Residues 633-710 (ETSSPVAGKT…DEDQWIELAG (78 aa)) enclose the BRCT domain.

This sequence belongs to the NAD-dependent DNA ligase family. LigA subfamily. Requires Mg(2+) as cofactor. It depends on Mn(2+) as a cofactor.

The catalysed reaction is NAD(+) + (deoxyribonucleotide)n-3'-hydroxyl + 5'-phospho-(deoxyribonucleotide)m = (deoxyribonucleotide)n+m + AMP + beta-nicotinamide D-nucleotide.. DNA ligase that catalyzes the formation of phosphodiester linkages between 5'-phosphoryl and 3'-hydroxyl groups in double-stranded DNA using NAD as a coenzyme and as the energy source for the reaction. It is essential for DNA replication and repair of damaged DNA. This Parvibaculum lavamentivorans (strain DS-1 / DSM 13023 / NCIMB 13966) protein is DNA ligase.